The sequence spans 362 residues: GID complex substrate-recognition subunit 4 (362 aa).

2 disordered regions span residues 1 to 40 (MINN…SRNQ) and 240 to 267 (STDD…ADAG). A Glycyl lysine isopeptide (Lys-Gly) (interchain with G-Cter in ubiquitin) cross-link involves residue Lys20. Position 27 is a phosphoserine (Ser27). Over residues 240 to 249 (STDDNGTTNA) the composition is skewed to polar residues.

This sequence belongs to the GID4/VID24 family. In terms of assembly, substrate-recognition component of the GID/CTLH ubiquitin ligase complex. In the absence of stress, the complex exists as an inactive anticipatory complex (GID(Ant)), composed of VID30/GID1, the E3 ubiquitin-ligase RMD5/GID2, VID28/GID5, GID8, and the RING-like subunit FYV10/GID9, awaiting a substrate receptor to form the active E3 ligase complex. When cells are shifted to glucose-containing medium, the substrate receptor VID24/GID4 is induced and becomes part of the complex, named GID(SR4). Additionally, GID7 transforms the GID(SR4) E3 ligase core into a higher-order supramolecular assembly (Chelator-GID(SR4)) specifically tailored for FBP1 ubiquitination. Under osmotic or heat stress, the substrate receptor GID10 is induced and becomes part of the complex, named GID(SR10). Within the complex, VVID24/GID4 is recruited to the complex via interaction with VID28/GID5. Interacts with proteins that have an N-terminal Pro/N-degron, including FBP1, ICL1 and MDH2. In terms of processing, ubiquitinated by the GID complex, leading to subsequent proteasomal degradation.

The protein localises to the cytoplasmic vesicle membrane. Its function is as follows. Substrate-recognition component of the GID E3 ligase complex recruiting N termini and catalyzing ubiquitination of proteins targeted for degradation. GID E3 is regulated through assembly with interchangeable N-degron-binding substrate receptors induced by distinct environmental perturbations. Required for the adaptation to the presence of glucose in the growth medium; mediates the degradation of enzymes involved in gluconeogenesis when cells are shifted to glucose-containing medium. Required for proteasome-dependent catabolite degradation of fructose-1,6-bisphosphatase (FBP1), malate dehydrogenase (MDH2), and other gluconeogenic enzymes, probably by targeting FBP1-containing vesicles to the vacuole, but is not required for FBP1 sequestration in cytoplasmic vesicles. Specific for substrates with an N-terminal Pro (Pro/N-degron), including FBP1, ICL1 and MDH2. Has high affinity for the N-terminal sequence Pro-Thr-Leu-Val, and can bind peptides with an N-terminal sequence of the type Pro-[Gly,Ala,Ser,Thr,Asp,Asn,Tyr,His]-[Ala,Val,Leu,Ile,Lys,Arg]-[Val,Cys,Pro,Leu,Ile,Trp]. Also recognizes nonproline N-terminal residues and targets an Ile-Gly-Lys-Trp-bearing protein for rapid degradation. The chain is GID complex substrate-recognition subunit 4 from Saccharomyces cerevisiae (strain ATCC 204508 / S288c) (Baker's yeast).